Reading from the N-terminus, the 428-residue chain is tRNA modification GTPase MnmE (428 aa).

(6S)-5-formyl-5,6,7,8-tetrahydrofolate-binding residues include Arg-20, Glu-77, and Lys-117. A TrmE-type G domain is found at 213–351; sequence GFEVAIVGSP…LVSRISDTLR (139 aa). GTP contacts are provided by residues 223–228, 242–248, and 267–270; these read NVGKST, SEYAGTT, and DTAG. Positions 227 and 248 each coordinate Mg(2+). Lys-428 serves as a coordination point for (6S)-5-formyl-5,6,7,8-tetrahydrofolate.

Belongs to the TRAFAC class TrmE-Era-EngA-EngB-Septin-like GTPase superfamily. TrmE GTPase family. In terms of assembly, homodimer. Heterotetramer of two MnmE and two MnmG subunits. K(+) serves as cofactor.

It localises to the cytoplasm. Exhibits a very high intrinsic GTPase hydrolysis rate. Involved in the addition of a carboxymethylaminomethyl (cmnm) group at the wobble position (U34) of certain tRNAs, forming tRNA-cmnm(5)s(2)U34. The polypeptide is tRNA modification GTPase MnmE (Ruegeria sp. (strain TM1040) (Silicibacter sp.)).